The primary structure comprises 546 residues: Chaperonin GroEL (546 aa).

ATP is bound by residues threonine 30–proline 33, lysine 51, aspartate 87–threonine 91, glycine 415, asparagine 479–alanine 481, and aspartate 495.

It belongs to the chaperonin (HSP60) family. As to quaternary structure, forms a cylinder of 14 subunits composed of two heptameric rings stacked back-to-back. Interacts with the co-chaperonin GroES.

It localises to the cytoplasm. The catalysed reaction is ATP + H2O + a folded polypeptide = ADP + phosphate + an unfolded polypeptide.. Together with its co-chaperonin GroES, plays an essential role in assisting protein folding. The GroEL-GroES system forms a nano-cage that allows encapsulation of the non-native substrate proteins and provides a physical environment optimized to promote and accelerate protein folding. The chain is Chaperonin GroEL from Stutzerimonas stutzeri (strain A1501) (Pseudomonas stutzeri).